Here is a 141-residue protein sequence, read N- to C-terminus: Large ribosomal subunit protein uL16 (141 aa).

A compositionally biased stretch (basic residues) spans 1–17 (MLMPKRTKFRKQMKGRN). Residues 1 to 22 (MLMPKRTKFRKQMKGRNRGYAT) are disordered.

It belongs to the universal ribosomal protein uL16 family. As to quaternary structure, part of the 50S ribosomal subunit.

In terms of biological role, binds 23S rRNA and is also seen to make contacts with the A and possibly P site tRNAs. This chain is Large ribosomal subunit protein uL16, found in Campylobacter curvus (strain 525.92).